Here is a 257-residue protein sequence, read N- to C-terminus: Ribonuclease HII (257 aa).

The region spanning 72 to 257 (TYIAGIDEVG…FAPIKDMIQK (186 aa)) is the RNase H type-2 domain. A divalent metal cation is bound by residues D78, E79, and D170.

It belongs to the RNase HII family. The cofactor is Mn(2+). Mg(2+) is required as a cofactor.

It localises to the cytoplasm. It carries out the reaction Endonucleolytic cleavage to 5'-phosphomonoester.. Endonuclease that specifically degrades the RNA of RNA-DNA hybrids. This is Ribonuclease HII from Bacillus cereus (strain G9842).